We begin with the raw amino-acid sequence, 223 residues long: Ribose-5-phosphate isomerase A (223 aa).

Residues 32 to 35 (TGST), 85 to 88 (DGAD), and 98 to 101 (KGGG) contribute to the substrate site. Residue E107 is the Proton acceptor of the active site. A substrate-binding site is contributed by K125.

This sequence belongs to the ribose 5-phosphate isomerase family. As to quaternary structure, homodimer.

It catalyses the reaction aldehydo-D-ribose 5-phosphate = D-ribulose 5-phosphate. The protein operates within carbohydrate degradation; pentose phosphate pathway; D-ribose 5-phosphate from D-ribulose 5-phosphate (non-oxidative stage): step 1/1. Its function is as follows. Catalyzes the reversible conversion of ribose-5-phosphate to ribulose 5-phosphate. The polypeptide is Ribose-5-phosphate isomerase A (Marinomonas sp. (strain MWYL1)).